The chain runs to 242 residues: MEFDPTKINISSIDHVTILQYIDEPNDIRLTVCIIQNINNITYYINITKINPHLANQFRTWKKRIAGRDYMTNLSRDTGIQQSKLTETIRNCQKNRNIYGLYIHYNLVINVVIDWITDVIVQSILRGLVNWYIANNNYTPNTPNNTTTISELDIIKILDKYEEVYRVSKEKECGICYEVVYSKRLENDRYFGLLDSCNHIFCITCINIWHRTRRETGASDNCPICRTRFRNITMSKFYKLVN.

Positions 21-131 constitute a KilA-N domain; it reads YIDEPNDIRL…QSILRGLVNW (111 aa). The RING-type zinc finger occupies 173–226; that stretch reads CGICYEVVYSKRLENDRYFGLLDSCNHIFCITCINIWHRTRRETGASDNCPICR.

The protein belongs to the orthopoxvirus OPG021 family.

The protein resides in the host cytoplasm. The catalysed reaction is S-ubiquitinyl-[E2 ubiquitin-conjugating enzyme]-L-cysteine + [acceptor protein]-L-lysine = [E2 ubiquitin-conjugating enzyme]-L-cysteine + N(6)-ubiquitinyl-[acceptor protein]-L-lysine.. Functionally, RING-finger E3 ubiquitin ligase which catalyzes the formation of both 'Lys-48'- and 'Lys-63'-linked polyubiquitin chains. Plays an important role in virulence by acting as an anti-apoptotic factor. The chain is Host range factor p28 (OPG021) from Cowpox virus (strain Brighton Red) (CPV).